A 929-amino-acid polypeptide reads, in one-letter code: Pyruvate dehydrogenase E1 component (929 aa).

Residue K375 forms an Isoglutamyl lysine isopeptide (Lys-Gln) (interchain with Q-Cter in protein Pup) linkage.

As to quaternary structure, homodimer. Part of the PDH complex, consisting of multiple copies of AceE (E1), DlaT (E2) and Lpd (E3). Mg(2+) is required as a cofactor. Thiamine diphosphate serves as cofactor.

The catalysed reaction is N(6)-[(R)-lipoyl]-L-lysyl-[protein] + pyruvate + H(+) = N(6)-[(R)-S(8)-acetyldihydrolipoyl]-L-lysyl-[protein] + CO2. Its function is as follows. Component of the pyruvate dehydrogenase (PDH) complex, that catalyzes the overall conversion of pyruvate to acetyl-CoA and CO(2). AceE has reductase activity with pyruvate but does not react with 2-oxoglutarate. In Mycolicibacterium smegmatis (strain ATCC 700084 / mc(2)155) (Mycobacterium smegmatis), this protein is Pyruvate dehydrogenase E1 component (aceE).